Consider the following 215-residue polypeptide: MKRGHEPKPAFGGAGEAGPGVMAERPLVPACPTGRPGRLQRHLLSGEFDQLRDFRIFESNFVQVTRLGEVANKVTMGVAASSPALELPDLLLLAGPAKENGHLQLFGLFPLQFVQLFVHDESRWQLKVKFRTGRAFYLQLRAPPESRDREFGQWVRLLYRLRFHSAQGAVPFTQDYSALEDDEDDDEDEDRDLPAGELQAMEARLDPQMSELWGL.

2 disordered regions span residues 1–20 (MKRG…AGPG) and 174–215 (QDYS…LWGL). Positions 178–191 (ALEDDEDDDEDEDR) are enriched in acidic residues.

It belongs to the GARIN family. As to quaternary structure, interacts (via N-terminus) with RAB2B (in GTP-bound form).

The protein localises to the golgi apparatus. RAB2B effector protein which promotes cytosolic DNA-induced innate immune responses. Regulates IFN responses against DNA viruses by regulating the CGAS-STING signaling axis. The polypeptide is Golgi-associated RAB2 interactor protein 5A (GARIN5A) (Bos taurus (Bovine)).